A 155-amino-acid chain; its full sequence is SsrA-binding protein (155 aa).

Belongs to the SmpB family.

The protein resides in the cytoplasm. Required for rescue of stalled ribosomes mediated by trans-translation. Binds to transfer-messenger RNA (tmRNA), required for stable association of tmRNA with ribosomes. tmRNA and SmpB together mimic tRNA shape, replacing the anticodon stem-loop with SmpB. tmRNA is encoded by the ssrA gene; the 2 termini fold to resemble tRNA(Ala) and it encodes a 'tag peptide', a short internal open reading frame. During trans-translation Ala-aminoacylated tmRNA acts like a tRNA, entering the A-site of stalled ribosomes, displacing the stalled mRNA. The ribosome then switches to translate the ORF on the tmRNA; the nascent peptide is terminated with the 'tag peptide' encoded by the tmRNA and targeted for degradation. The ribosome is freed to recommence translation, which seems to be the essential function of trans-translation. The chain is SsrA-binding protein from Bacillus cytotoxicus (strain DSM 22905 / CIP 110041 / 391-98 / NVH 391-98).